The primary structure comprises 796 residues: Protein translocase subunit SecA 2 (796 aa).

Residues Q84, 102 to 106 (GEGKT), and D496 contribute to the ATP site.

Belongs to the SecA family. In terms of assembly, monomer and homodimer. Part of the essential Sec protein translocation apparatus which comprises SecA, SecYEG and auxiliary proteins SecDF. Other proteins may also be involved.

It is found in the cell membrane. It localises to the cytoplasm. It catalyses the reaction ATP + H2O + cellular proteinSide 1 = ADP + phosphate + cellular proteinSide 2.. Part of the Sec protein translocase complex. Interacts with the SecYEG preprotein conducting channel. Has a central role in coupling the hydrolysis of ATP to the transfer of proteins into and across the cell membrane, serving as an ATP-driven molecular motor driving the stepwise translocation of polypeptide chains across the membrane. The sequence is that of Protein translocase subunit SecA 2 from Staphylococcus aureus (strain Mu3 / ATCC 700698).